A 792-amino-acid polypeptide reads, in one-letter code: Ribonucleoside-diphosphate reductase large subunit (792 aa).

The 92-residue stretch at Met1–Lys92 folds into the ATP-cone domain. ATP-binding positions include Lys5–Arg6, Glu11–Lys17, Thr53, and Asp57. Lys17 is modified (N6-acetyllysine). Residues Ser202 and Ser217 each coordinate GDP. Cys218 and Cys444 are oxidised to a cystine. DTTP contacts are provided by residues Asp226–Ile228, Lys243, Arg256, and Ala263–Gly264. Residue Lys376 is modified to N6-acetyllysine. Catalysis depends on Ser427, which acts as the Proton acceptor. Catalysis depends on Cys429, which acts as the Cysteine radical intermediate. Residues Glu431 and Thr604–Thr607 each bind GDP. The active-site Proton acceptor is the Glu431. Thr751 is modified (phosphothreonine).

It belongs to the ribonucleoside diphosphate reductase large chain family. In terms of assembly, heterodimer of a large and a small subunit. Interacts with RRM2B. Interacts with AHCYL1 which inhibits its activity.

The protein resides in the cytoplasm. It catalyses the reaction a 2'-deoxyribonucleoside 5'-diphosphate + [thioredoxin]-disulfide + H2O = a ribonucleoside 5'-diphosphate + [thioredoxin]-dithiol. Under complex allosteric control mediated by deoxynucleoside triphosphates and ATP binding to separate specificity and activation sites on the M1 subunit. The type of nucleotide bound at the specificity site determines substrate preference. It seems probable that ATP makes the enzyme reduce CDP and UDP, dGTP favors ADP reduction and dTTP favors GDP reduction. Stimulated by ATP and inhibited by dATP binding to the activity site, the dATP inhibition is mediated by AHCYL1 which stabilizes dATP in the site. In terms of biological role, provides the precursors necessary for DNA synthesis. Catalyzes the biosynthesis of deoxyribonucleotides from the corresponding ribonucleotides. The chain is Ribonucleoside-diphosphate reductase large subunit (RRM1) from Pongo abelii (Sumatran orangutan).